We begin with the raw amino-acid sequence, 221 residues long: MEKFEQFKGIVAPLDRANVDTDAIIPKQFLKSIKRSGFGQNLFDEWRYLDYGEPGKDISLRQLNPDFILNQPRYQGARILVARDNFGCGSSREHAPWALQDYGFAVIIAPSFADIFYNNCFKIGLLPIVSEASIVDRLIRDTLETDGYRLEVNLDAQTVTTPSGEIHRFEVDSFRKHCLLNGLDEIGLTLQHADKIRTFEMNRRDRQPWLFLQQNGDKLRT.

Belongs to the LeuD family. LeuD type 1 subfamily. Heterodimer of LeuC and LeuD.

The enzyme catalyses (2R,3S)-3-isopropylmalate = (2S)-2-isopropylmalate. It functions in the pathway amino-acid biosynthesis; L-leucine biosynthesis; L-leucine from 3-methyl-2-oxobutanoate: step 2/4. Functionally, catalyzes the isomerization between 2-isopropylmalate and 3-isopropylmalate, via the formation of 2-isopropylmaleate. The sequence is that of 3-isopropylmalate dehydratase small subunit from Nitrosomonas europaea (strain ATCC 19718 / CIP 103999 / KCTC 2705 / NBRC 14298).